We begin with the raw amino-acid sequence, 439 residues long: MEGFVLAGTSSGVGKTVATLATLTALEDAGYQPQPAKAGPDFIDPSHHEALVDTPSRTLDPWLAGEDGMRRTYWRGTGDICVVEGVMGLYDGTKTSTAAVAEGLDLPVVLVVDAKAGMESVAATALGFAQYADRIGVDIEVAGILAQRAHGGRHADGIRDALPEDLTYFGRIPPMSDLEIPDRHLGLHMGSEAGLDRDALSTAAETIDIERLVETARAPPEVATTERNTGDSPADRRVAVAQDSAFCFIYPSVLERLRSEASVEPFSPVAGDSVPDADAIYLPGGYPELHGESLETGGTLDEIAVRAADGVPVYGECGGLMALSESLTTTDGDTYEMAGVLPADIEMQDRYQALDHVELEARADTVAATSGAHRRGHEFHYSAATLGSDASFAFDMVRGDGIDGEHDGLTEYSTIGTYCHCHGESGAFDRLLAVPSKDI.

The interval 214–235 is disordered; it reads ETARAPPEVATTERNTGDSPAD. Residues 237-428 form the GATase cobBQ-type domain; sequence RVAVAQDSAF…CHCHGESGAF (192 aa). Cysteine 317 (nucleophile) is an active-site residue.

It belongs to the CobB/CbiA family. Mg(2+) serves as cofactor.

It catalyses the reaction cob(II)yrinate + 2 L-glutamine + 2 ATP + 2 H2O = cob(II)yrinate a,c diamide + 2 L-glutamate + 2 ADP + 2 phosphate + 2 H(+). It functions in the pathway cofactor biosynthesis; adenosylcobalamin biosynthesis; cob(II)yrinate a,c-diamide from sirohydrochlorin (anaerobic route): step 10/10. Functionally, catalyzes the ATP-dependent amidation of the two carboxylate groups at positions a and c of cobyrinate, using either L-glutamine or ammonia as the nitrogen source. This chain is Cobyrinate a,c-diamide synthase, found in Haloarcula marismortui (strain ATCC 43049 / DSM 3752 / JCM 8966 / VKM B-1809) (Halobacterium marismortui).